Consider the following 734-residue polypeptide: MDSILFWLVPVASVLALCFAYYFHKQMMKESEGTPQMIKIAAAVRKGAMSYLKQQYKIVGCVFLGLVILFSIMAYGFHVQNVWVPIAFLTGGFFSGLSGFLGMKTATYASARTANAARNSLNSGLRIAFRSGAVMGLVVVGLGLLDISFWYLLLNAVIPADALTPTHKLCVITTTMLTFGMGASTQALFARVGGGIYTKAADVGADLVGKVEAGIPEDDPRNPATIADNVGDNVGDVAGMGADLYESYCGSILATAALGAAAFIHSADTVMQFKAVIAPMLIAAVGILLSIIGIFSVRTKENATVKDLLGSLAFGTNLSSVLIVAATFLILWLLQLDNWIWISCAVVVGLLVGIVIGRSTEYYTSQSYRPTQKLSESGKTGPATVIISGIGLGMLSTAIPVIAVVVGIIASFLLASGFDFSNVGMGLYGIGIAAVGMLSTLGITLATDAYGPIADNAGGNAEMAGLGAEVRKRTDALDSLGNTTAATGKGFAIGSAALTGLALLASYIEEIRIGLTRLGTVDLSMPNGDVVSTANATFVDFMNYYDVTLMNPKVLSGMFLGSMMAFLFCGLTMNAVGRAAGHMVDEVRRQFREIKGILTGEAEPDYERCVAISTKGAQREMVIPSLIAILAPIATGLIFGVTGVLGLLIGGLSTGFVLAIFMANAGGAWDNAKKYVEEGNFGGKGGEVHKATVVGDTVGDPFKDTSGPSLNILIKLMSMVAIVMAGLTVAWSLF.

The next 5 membrane-spanning stretches (helical) occupy residues 3-23 (SILFWLVPVASVLALCFAYYF), 58-78 (IVGCVFLGLVILFSIMAYGFH), 82-102 (VWVPIAFLTGGFFSGLSGFLG), 134-154 (VMGLVVVGLGLLDISFWYLLL), and 169-189 (LCVITTTMLTFGMGASTQALF). Lysine 199 contributes to the substrate binding site. The Mg(2+) site is built by aspartate 202, aspartate 206, asparagine 229, and aspartate 232. 7 helical membrane passes run 244 to 264 (LYESYCGSILATAALGAAAFI), 275 to 295 (AVIAPMLIAAVGILLSIIGIF), 314 to 334 (FGTNLSSVLIVAATFLILWLL), 336 to 356 (LDNWIWISCAVVVGLLVGIVI), 377 to 397 (SGKTGPATVIISGIGLGMLST), 398 to 418 (AIPVIAVVVGIIASFLLASGF), and 423 to 443 (VGMGLYGIGIAAVGMLSTLGI). Aspartate 455 serves as a coordination point for Mg(2+). 4 helical membrane passes run 491 to 511 (FAIGSAALTGLALLASYIEEI), 557 to 577 (GMFLGSMMAFLFCGLTMNAVG), 629 to 649 (ILAPIATGLIFGVTGVLGLLI), and 650 to 670 (GGLSTGFVLAIFMANAGGAWD). Aspartate 670, aspartate 696, and aspartate 700 together coordinate Ca(2+). Lysine 703 serves as a coordination point for substrate. The chain crosses the membrane as a helical span at residues 712–732 (ILIKLMSMVAIVMAGLTVAWS).

This sequence belongs to the H(+)-translocating pyrophosphatase (TC 3.A.10) family. K(+)-stimulated subfamily. As to quaternary structure, homodimer. Requires Mg(2+) as cofactor.

It is found in the cell inner membrane. The catalysed reaction is Na(+)(in) + diphosphate + H2O = Na(+)(out) + 2 phosphate + H(+). Requires K(+) for maximal activity. Functionally, sodium pump that utilizes the energy of pyrophosphate hydrolysis as the driving force for Na(+) movement across the membrane. This Bacteroides thetaiotaomicron (strain ATCC 29148 / DSM 2079 / JCM 5827 / CCUG 10774 / NCTC 10582 / VPI-5482 / E50) protein is Putative K(+)-stimulated pyrophosphate-energized sodium pump.